Reading from the N-terminus, the 224-residue chain is Claudin-17 (224 aa).

Topologically, residues 1–7 (MAFYPLQ) are cytoplasmic. The helical transmembrane segment at 8–28 (IAGLVLGFLGMVGTLATTLLP) threads the bilayer. At 29–81 (QWRVSAFVGSNIIVFERLWEGLWMNCIRQARVRLQCKFYSSLLALPPALETAR) the chain is on the extracellular side. Residues 82 to 102 (ALMCVAVALSLIALLIGICGM) form a helical membrane-spanning segment. Over 103–124 (KQVQCTGSNERAKAYLLGTSGV) the chain is Cytoplasmic. The chain crosses the membrane as a helical span at residues 125–145 (LFILTGIFVLIPVSWTANIII). Topologically, residues 146 to 164 (RDFYNPAIHIGQKRELGAA) are extracellular. Residues 165–185 (LFLGWASAAVLFIGGGLLCGF) form a helical membrane-spanning segment. The Cytoplasmic segment spans residues 186–224 (CCCNRKKQGYRYPVPGYRVPHTDKRRNTTMLSKTSTSYV).

The protein belongs to the claudin family. Cannot form tight junction strands on its own. Interacts with OCLN. In terms of tissue distribution, in the kidney, expressed in the proximal tubule and in the Henle's loop. In the distal convoluted tubule, not expressed in all tubules. Not detected in the collecting duct (at protein level).

It is found in the cell junction. Its subcellular location is the tight junction. It localises to the basolateral cell membrane. It catalyses the reaction chloride(in) = chloride(out). The enzyme catalyses hydrogencarbonate(in) = hydrogencarbonate(out). It carries out the reaction bromide(in) = bromide(out). The catalysed reaction is iodide(out) = iodide(in). It catalyses the reaction fluoride(in) = fluoride(out). The enzyme catalyses nitrate(in) = nitrate(out). It carries out the reaction thiocyanate(in) = thiocyanate(out). In terms of biological role, channel-forming tight junction protein with selectivity for anions, including chloride and hydrogencarbonate, and for solutes smaller than 9 Angstrom in diameter. In the kidney proximal tubule, may be involved in paracellular reabsorption of filtered anions. Does not affect water permeability. The polypeptide is Claudin-17 (CLDN17) (Homo sapiens (Human)).